A 227-amino-acid polypeptide reads, in one-letter code: Cytochrome c oxidase subunit 2 (227 aa).

At 1-14 (MAYPFQLGFQDATS) the chain is on the mitochondrial intermembrane side. The chain crosses the membrane as a helical span at residues 15 to 45 (PIMEELLHFHDHTLMIVFLISSLVLYIISLM). The Mitochondrial matrix portion of the chain corresponds to 46-59 (LTTKLTHTSTMDAQ). Residues 60–87 (EVETIWTILPAIILILIALPSLRILYMM) form a helical membrane-spanning segment. The Mitochondrial intermembrane segment spans residues 88 to 227 (DEINNPSLTV…YFEKWSASML (140 aa)). Cu cation contacts are provided by histidine 161, cysteine 196, glutamate 198, cysteine 200, histidine 204, and methionine 207. Glutamate 198 provides a ligand contact to Mg(2+). Position 218 is a phosphotyrosine (tyrosine 218).

It belongs to the cytochrome c oxidase subunit 2 family. Component of the cytochrome c oxidase (complex IV, CIV), a multisubunit enzyme composed of 14 subunits. The complex is composed of a catalytic core of 3 subunits MT-CO1, MT-CO2 and MT-CO3, encoded in the mitochondrial DNA, and 11 supernumerary subunits COX4I, COX5A, COX5B, COX6A, COX6B, COX6C, COX7A, COX7B, COX7C, COX8 and NDUFA4, which are encoded in the nuclear genome. The complex exists as a monomer or a dimer and forms supercomplexes (SCs) in the inner mitochondrial membrane with NADH-ubiquinone oxidoreductase (complex I, CI) and ubiquinol-cytochrome c oxidoreductase (cytochrome b-c1 complex, complex III, CIII), resulting in different assemblies (supercomplex SCI(1)III(2)IV(1) and megacomplex MCI(2)III(2)IV(2)). Found in a complex with TMEM177, COA6, COX18, COX20, SCO1 and SCO2. Interacts with TMEM177 in a COX20-dependent manner. Interacts with COX20. Interacts with COX16. The cofactor is Cu cation.

It is found in the mitochondrion inner membrane. The enzyme catalyses 4 Fe(II)-[cytochrome c] + O2 + 8 H(+)(in) = 4 Fe(III)-[cytochrome c] + 2 H2O + 4 H(+)(out). Its function is as follows. Component of the cytochrome c oxidase, the last enzyme in the mitochondrial electron transport chain which drives oxidative phosphorylation. The respiratory chain contains 3 multisubunit complexes succinate dehydrogenase (complex II, CII), ubiquinol-cytochrome c oxidoreductase (cytochrome b-c1 complex, complex III, CIII) and cytochrome c oxidase (complex IV, CIV), that cooperate to transfer electrons derived from NADH and succinate to molecular oxygen, creating an electrochemical gradient over the inner membrane that drives transmembrane transport and the ATP synthase. Cytochrome c oxidase is the component of the respiratory chain that catalyzes the reduction of oxygen to water. Electrons originating from reduced cytochrome c in the intermembrane space (IMS) are transferred via the dinuclear copper A center (CU(A)) of subunit 2 and heme A of subunit 1 to the active site in subunit 1, a binuclear center (BNC) formed by heme A3 and copper B (CU(B)). The BNC reduces molecular oxygen to 2 water molecules using 4 electrons from cytochrome c in the IMS and 4 protons from the mitochondrial matrix. This is Cytochrome c oxidase subunit 2 (MT-CO2) from Felis catus (Cat).